The chain runs to 186 residues: UPF0301 protein Daro_3893 (186 aa).

Belongs to the UPF0301 (AlgH) family.

In Dechloromonas aromatica (strain RCB), this protein is UPF0301 protein Daro_3893.